Reading from the N-terminus, the 144-residue chain is Large ribosomal subunit protein uL15 (144 aa).

The interval 1–53 is disordered; it reads MRLNTLSPAEGSKHASKRLGRGIGSGLGKTGGRGHKGQKSRSGGGVRRGFEGG. Residues 21-31 show a composition bias toward gly residues; that stretch reads RGIGSGLGKTG.

Belongs to the universal ribosomal protein uL15 family. As to quaternary structure, part of the 50S ribosomal subunit.

In terms of biological role, binds to the 23S rRNA. This chain is Large ribosomal subunit protein uL15, found in Edwardsiella ictaluri (strain 93-146).